A 356-amino-acid polypeptide reads, in one-letter code: GMP reductase (356 aa).

Residues 26–27 (SR), Lys78, 132–134 (DVA), and 183–184 (IG) each bind NADP(+). K(+)-binding residues include Gly184, Gly186, and Cys189. Cys189 (thioimidate intermediate) is an active-site residue. Thr191 acts as the Proton donor/acceptor in catalysis. Arg192 contacts K(+). GMP is bound by residues 222-224 (DGG), 245-246 (GG), 271-273 (GMS), and 289-293 (RASEG). Residues Met272, 288 to 289 (YR), and 317 to 320 (SACT) each bind NADP(+).

This sequence belongs to the IMPDH/GMPR family.

The catalysed reaction is IMP + NH4(+) + NADP(+) = GMP + NADPH + 2 H(+). Its function is as follows. Catalyzes the irreversible NADPH-dependent deamination of GMP to IMP. It functions in the conversion of nucleobase, nucleoside and nucleotide derivatives of G to A nucleotides, and in maintaining the intracellular balance of A and G nucleotides. The polypeptide is GMP reductase (Ascaris suum (Pig roundworm)).